Here is a 209-residue protein sequence, read N- to C-terminus: Molybdenum cofactor guanylyltransferase (209 aa).

GTP-binding positions include 16–18 (LAG), Lys28, Asn56, Asp69, and Asp103. Asp103 is a binding site for Mg(2+).

Belongs to the MobA family. As to quaternary structure, monomer. The cofactor is Mg(2+).

The protein resides in the cytoplasm. It carries out the reaction Mo-molybdopterin + GTP + H(+) = Mo-molybdopterin guanine dinucleotide + diphosphate. In terms of biological role, transfers a GMP moiety from GTP to Mo-molybdopterin (Mo-MPT) cofactor (Moco or molybdenum cofactor) to form Mo-molybdopterin guanine dinucleotide (Mo-MGD) cofactor. The sequence is that of Molybdenum cofactor guanylyltransferase from Rhizobium leguminosarum bv. trifolii (strain WSM2304).